A 664-amino-acid chain; its full sequence is MRGCLQLARWLSAGPKCPAASLPKAPSGLYNTIRSFTSSAQLASRARAASKPASDLETRIAQIPIDRYRNFCIVAHVDHGKSTLSDRLLELTGTIQPGSNKQVLDKLDVERERGITVKAQTCTMIYNHNGEDYLLHLVDTPGHVDFRAEVSRSYASCGGALLLVDASQGIQAQTVANFYLAFAQGLELIPVINKVDLPSAEPEKALQQMKTSFELDTENAVMVSAKTGLNVEQLLPTVVEKIPAPVGDTQKPLRMLLVDSWYDSYKGVICLVRIFDGEVRAGDQLVSFATGIKYYVGEVGIMYPTETSQTVLRAGQVGYIFFNPGMKRSQEAKIGDTYTKVGSEKAVEPLPGFEEPKAMVFVAAYPVDADHFEHLEDSINQLMLNDRSITVQKESSEALGAGFRLGFLGTLHCSVFEDRLRQEHGASIIITPPSVPVKVMWKDGREEIVTSPARFPEEDDLRSKVAEIHEPYVLATLTFPDEYLGKVIELCEANRGVQQTLEYFTSTQVILKYELPLAQLVDDFFGKLKGSTKGYATLDYEESAWQPSNIVKLQLLVNKAPVDAVARVVHYSQIERLGRKWVTKFKQHVDRQLFEVVIQAAVGRKVIARETVKPYRKDVLAKLHASDVSRRRKLLEKQKEGRKRLRAVGNVVIEQKAFQNFLAK.

Residues 1 to 43 (MRGCLQLARWLSAGPKCPAASLPKAPSGLYNTIRSFTSSAQLA) constitute a mitochondrion transit peptide. In terms of domain architecture, tr-type G spans 66 to 246 (DRYRNFCIVA…TVVEKIPAPV (181 aa)). Residues 75-82 (AHVDHGKS), 139-143 (DTPGH), and 193-196 (NKVD) each bind GTP.

This sequence belongs to the TRAFAC class translation factor GTPase superfamily. Classic translation factor GTPase family. LepA subfamily.

The protein resides in the mitochondrion inner membrane. The enzyme catalyses GTP + H2O = GDP + phosphate + H(+). In terms of biological role, promotes mitochondrial protein synthesis. May act as a fidelity factor of the translation reaction, by catalyzing a one-codon backward translocation of tRNAs on improperly translocated ribosomes. Binds to mitochondrial ribosomes in a GTP-dependent manner. This is Translation factor guf1, mitochondrial (guf1) from Aspergillus oryzae (strain ATCC 42149 / RIB 40) (Yellow koji mold).